Reading from the N-terminus, the 615-residue chain is Chaperone protein HscA (615 aa).

Belongs to the heat shock protein 70 family.

In terms of biological role, chaperone involved in the maturation of iron-sulfur cluster-containing proteins. Has a low intrinsic ATPase activity which is markedly stimulated by HscB. Involved in the maturation of IscU. This Xenorhabdus nematophila (strain ATCC 19061 / DSM 3370 / CCUG 14189 / LMG 1036 / NCIMB 9965 / AN6) protein is Chaperone protein HscA.